We begin with the raw amino-acid sequence, 227 residues long: PKHD-type hydroxylase ABSDF3031 (227 aa).

A Fe2OG dioxygenase domain is found at 78 to 178; that stretch reads KIIPPLFNRY…RFASFFWVQS (101 aa). Fe cation is bound by residues His96, Asp98, and His159. A 2-oxoglutarate-binding site is contributed by Arg169.

It depends on Fe(2+) as a cofactor. L-ascorbate serves as cofactor.

The sequence is that of PKHD-type hydroxylase ABSDF3031 from Acinetobacter baumannii (strain SDF).